The following is a 313-amino-acid chain: 4-diphosphocytidyl-2-C-methyl-D-erythritol kinase (313 aa).

K27 is a catalytic residue. 110 to 120 (PIGGGVGGGSS) lines the ATP pocket. D152 is a catalytic residue.

It belongs to the GHMP kinase family. IspE subfamily.

It carries out the reaction 4-CDP-2-C-methyl-D-erythritol + ATP = 4-CDP-2-C-methyl-D-erythritol 2-phosphate + ADP + H(+). It participates in isoprenoid biosynthesis; isopentenyl diphosphate biosynthesis via DXP pathway; isopentenyl diphosphate from 1-deoxy-D-xylulose 5-phosphate: step 3/6. Functionally, catalyzes the phosphorylation of the position 2 hydroxy group of 4-diphosphocytidyl-2C-methyl-D-erythritol. This Histophilus somni (strain 129Pt) (Haemophilus somnus) protein is 4-diphosphocytidyl-2-C-methyl-D-erythritol kinase.